A 90-amino-acid polypeptide reads, in one-letter code: Small ribosomal subunit protein uS19 (90 aa).

Belongs to the universal ribosomal protein uS19 family.

In terms of biological role, protein S19 forms a complex with S13 that binds strongly to the 16S ribosomal RNA. The chain is Small ribosomal subunit protein uS19 from Clostridium beijerinckii (strain ATCC 51743 / NCIMB 8052) (Clostridium acetobutylicum).